A 220-amino-acid polypeptide reads, in one-letter code: FMN-dependent NADH:quinone oxidoreductase (220 aa).

FMN-binding positions include S10, 17–19 (SAS), and 136–139 (SRGG). Residues 200-220 (HSEAVTKAKELTERLTADNGR) form a disordered region.

Belongs to the azoreductase type 1 family. In terms of assembly, homodimer. FMN serves as cofactor.

It catalyses the reaction 2 a quinone + NADH + H(+) = 2 a 1,4-benzosemiquinone + NAD(+). It carries out the reaction N,N-dimethyl-1,4-phenylenediamine + anthranilate + 2 NAD(+) = 2-(4-dimethylaminophenyl)diazenylbenzoate + 2 NADH + 2 H(+). In terms of biological role, quinone reductase that provides resistance to thiol-specific stress caused by electrophilic quinones. Functionally, also exhibits azoreductase activity. Catalyzes the reductive cleavage of the azo bond in aromatic azo compounds to the corresponding amines. This is FMN-dependent NADH:quinone oxidoreductase from Streptomyces coelicolor (strain ATCC BAA-471 / A3(2) / M145).